A 417-amino-acid polypeptide reads, in one-letter code: Calreticulin (417 aa).

The first 17 residues, 1–17 (MLLPVPLLLGLLGLAAA), serve as a signal peptide directing secretion. An N-domain region spans residues 18–197 (DPTVYFKEQF…NSQVESGSLE (180 aa)). Gln26 serves as a coordination point for Ca(2+). Lys48 bears the N6-acetyllysine mark. 2 residues coordinate Ca(2+): Lys62 and Lys64. Lys64 bears the N6-(2-hydroxyisobutyryl)lysine mark. Positions 109, 111, 128, and 135 each coordinate an alpha-D-glucoside. Residues Cys137 and Cys163 are joined by a disulfide bond. The residue at position 159 (Lys159) is an N6-acetyllysine. The N-linked (GlcNAc...) asparagine glycan is linked to Asn179. The 1-1 repeat unit spans residues 191–202 (VESGSLEDDWDF). The 4 X approximate repeats stretch occupies residues 191-255 (VESGSLEDDW…DAKKPEDWDE (65 aa)). The segment at 193–270 (SGSLEDDWDF…WEPPVIQNPE (78 aa)) is disordered. The P-domain stretch occupies residues 198 to 308 (DDWDFLPPKK…YSPDSNIYAY (111 aa)). Residues 207–251 (KIKDPDAAKPEDWDDRAKIDDPTDSKPEDWDKPEHIPDPDAKKPE) show a composition bias toward basic and acidic residues. An N6-acetyllysine modification is found at Lys209. 6 consecutive repeat copies span residues 210-221 (DPDAAKPEDWDD), 227-238 (DPTDSKPEDWDK), 244-255 (DPDAKKPEDWDE), 259-269 (GEWEPPVIQNP), 273-283 (GEWKPRQIDNP), and 287-297 (GIWIHPEIDNP). The segment at 237–270 (DKPEHIPDPDAKKPEDWDEEMDGEWEPPVIQNPE) is interaction with PPIB. Acidic residues predominate over residues 252–261 (DWDEEMDGEW). A 3 X approximate repeats region spans residues 259 to 297 (GEWEPPVIQNPEYKGEWKPRQIDNPEYKGIWIHPEIDNP). Positions 309–417 (ENFAVLGLDL…AAAGQAKDEL (109 aa)) are C-domain. Residue Asp317 coordinates an alpha-D-glucoside. Asp328 contributes to the Ca(2+) binding site. The segment at 350–417 (TKAAEKQMKD…AAAGQAKDEL (68 aa)) is disordered. Residues 352 to 378 (AAEKQMKDKQDEEQRLHEEEEEKKGKE) show a composition bias toward basic and acidic residues. Acidic residues predominate over residues 379–408 (EEEADKDDDEDKDEDEEDEDEKEEEEEEDA). Residues 414–417 (KDEL) carry the Prevents secretion from ER motif.

It belongs to the calreticulin family. In terms of assembly, monomer. Component of an EIF2 complex at least composed of CELF1/CUGBP1, CALR, CALR3, EIF2S1, EIF2S2, HSP90B1 and HSPA5. Interacts with PDIA3/ERp57 and SPACA9. Interacts with TRIM21. Interacts with NR3C1. Interacts with PPIB. Interacts (via P-domain) with PDIA5. Interacts with GABARAP. Interacts with CLCC1.

It localises to the endoplasmic reticulum lumen. The protein localises to the cytoplasm. The protein resides in the cytosol. It is found in the secreted. Its subcellular location is the extracellular space. It localises to the extracellular matrix. The protein localises to the cell surface. The protein resides in the sarcoplasmic reticulum lumen. It is found in the cytoplasmic vesicle. Its subcellular location is the secretory vesicle. It localises to the cortical granule. The protein localises to the cytolytic granule. Its function is as follows. Calcium-binding chaperone that promotes folding, oligomeric assembly and quality control in the endoplasmic reticulum (ER) via the calreticulin/calnexin cycle. This lectin interacts transiently with almost all of the monoglucosylated glycoproteins that are synthesized in the ER. Interacts with the DNA-binding domain of NR3C1 and mediates its nuclear export. Involved in maternal gene expression regulation. May participate in oocyte maturation via the regulation of calcium homeostasis. Present in the cortical granules of non-activated oocytes, is exocytosed during the cortical reaction in response to oocyte activation and might participate in the block to polyspermy. This chain is Calreticulin (CALR), found in Bos taurus (Bovine).